A 502-amino-acid polypeptide reads, in one-letter code: UPF0371 protein CLB_0371 (502 aa).

Belongs to the UPF0371 family.

This Clostridium botulinum (strain ATCC 19397 / Type A) protein is UPF0371 protein CLB_0371.